Consider the following 339-residue polypeptide: Zinc metalloprotease MJ0392 (339 aa).

Helical transmembrane passes span 10 to 30 (IMGIPIELHITFILFLVVIIG) and 33 to 53 (IMNNSIFWAVLFILLFVSVVL). His-54 contacts Zn(2+). Glu-55 is an active-site residue. His-58 serves as a coordination point for Zn(2+). 2 helical membrane-spanning segments follow: residues 96–116 (IAGPLVSFIIGIVLLIVSQFF) and 125–145 (LLYTLSLLNLMLGGFNLIPAF). Asp-148 contributes to the Zn(2+) binding site. Transmembrane regions (helical) follow at residues 180 to 200 (IMLLFGLLSMNIILILVSLFV) and 251 to 271 (YFGYPVVENGKLVGCIGIGNI). CBS domains lie at 226-281 (MTPN…VRDY) and 281-335 (YMEK…ELKE).

Belongs to the peptidase M50B family. Monomer. The cofactor is Zn(2+).

The protein resides in the cell membrane. Inhibited by 1,10-phenanthroline. In terms of biological role, a site-2 regulated intramembrane protease (S2P) that cleaves type-2 transmembrane proteins within their membrane-spanning domains; its endogenous substrate is unknown. Regulated intramembrane proteolysis (RIP) occurs when an extracytoplasmic signal triggers a concerted proteolytic cascade to transmit information and elicit cellular responses. A membrane-spanning regulatory substrate protein is first cut extracytoplasmically (site-1 protease, S1P), then within the membrane itself (site-2 protease, S2P, this enzyme), while cytoplasmic proteases finish degrading the regulatory protein, liberating the effector protein. Possible signals, S1P and substrates are unknown in this organism. This Methanocaldococcus jannaschii (strain ATCC 43067 / DSM 2661 / JAL-1 / JCM 10045 / NBRC 100440) (Methanococcus jannaschii) protein is Zinc metalloprotease MJ0392.